A 130-amino-acid polypeptide reads, in one-letter code: MMPAKKTARKRRVKKHVESGVAHIHSTFNNTLVMITDVQGNAVAWSSAGALGFKGSRKSTPFAAQMAAEAAAKSAMDQGMKHVEVSVKGPGAGRESAIRSLQATGLEITAIRDVTPVPHNGSRPPKRRRA.

Residues 111–130 (IRDVTPVPHNGSRPPKRRRA) are disordered.

Belongs to the universal ribosomal protein uS11 family. In terms of assembly, part of the 30S ribosomal subunit. Interacts with proteins S7 and S18. Binds to IF-3.

Its function is as follows. Located on the platform of the 30S subunit, it bridges several disparate RNA helices of the 16S rRNA. Forms part of the Shine-Dalgarno cleft in the 70S ribosome. This chain is Small ribosomal subunit protein uS11, found in Lactobacillus acidophilus (strain ATCC 700396 / NCK56 / N2 / NCFM).